Here is a 586-residue protein sequence, read N- to C-terminus: MAASGVEKSSKKKTEKKLAAREEAKLLAGFMGVMNNMRKQKTLCDVILMVQERKIPAHRVVLAAASHFFNLMFTTNMLESKSFEVELKDAEPDIIEQLVEFAYTARISVNSNNVQSLLDAANQYQIEPVKKMCVDFLKEQVDASNCLGISVLAECLDCPELKATADDFIHQHFTEVYKTDEFLQLDVKRVTHLLNQDTLTVRAEDQVYDAAVRWLKYDEPNRQPFMVDILAKVRFPLISKNFLSKTVQAEPLIQDNPECLKMVISGMRYHLLSPEDREELVDGTRPRRKKHDYRIALFGGSQPQSCRYFNPKDYSWTDIRCPFEKRRDAACVFWDNVVYILGGSQLFPIKRMDCYNVVKDSWYSKLGPPTPRDSLAACAAEGKIYTSGGSEVGNSALYLFECYDTRTESWHTKPSMLTQRCSHGMVEANGLIYVCGGSLGNNVSGRVLNSCEVYDPATETWTELCPMIEARKNHGLVFVKDKIFAVGGQNGLGGLDNVEYYDIKLNEWKMVSPMPWKGVTVKCAAVGSIVYVLAGFQGVGRLGHILEYNTETDKWVANSKVRAFPVTSCLICVVDTCGANEETLET.

One can recognise a BTB domain in the interval 44–111 (CDVILMVQER…AYTARISVNS (68 aa)). The BACK domain maps to 146–248 (CLGISVLAEC…SKNFLSKTVQ (103 aa)). Kelch repeat units lie at residues 294–336 (RIAL…FWDN), 337–382 (VVYI…AAEG), 383–430 (KIYT…EANG), 431–481 (LIYV…FVKD), 483–528 (IFAV…AVGS), and 530–575 (VYVL…CVVD).

Homodimer. Component of the BCR(KLHL7) E3 ubiquitin ligase complex, at least composed of CUL3 and KLHL7 and RBX1. In terms of tissue distribution, widely expressed, with highest levels in adult and fetal heart, CNS and adult testis.

Its subcellular location is the nucleus. It is found in the cytoplasm. Its pathway is protein modification; protein ubiquitination. Its function is as follows. Substrate-specific adapter of a BCR (BTB-CUL3-RBX1) E3 ubiquitin ligase complex. The BCR(KLHL7) complex acts by mediating ubiquitination and subsequent degradation of substrate proteins. Probably mediates 'Lys-48'-linked ubiquitination. The polypeptide is Kelch-like protein 7 (KLHL7) (Homo sapiens (Human)).